A 671-amino-acid chain; its full sequence is MEPIEQQLTELRTTLRHHEYLYHVMDAPEIPDAEYDRLMRELRELEAQRPDLITPDSPTQRVGAAPLTAFNQIRHEVPMLSLDNVFDEESFLAFNKRVQDRLKSTENVIWCCELKLDGLAVSILYENGVLVSAATRGDGTTGEDITSNVRTIRAIPLKLHGDNIPARLEVRGEVFLPQAGFEKINEDARRTGGKVFANPRNAAAGSLRQLDPRITAKRPLTFFCYGVGILEGGELPDTHLGRLLQFKAWGLPVSDRVTLCDSPQAVLDFYRNVEKDRPTLGFDIDGVVIKVNSLVLQEQLGFVARAPRWAVAFKFPAQEQMTFVRDVEFQVGRTGAITPVARLEPVQVAGVLVSNATLHNADEIERLGLRIGDKVVIRRAGDVIPQVVNVVLSERPEETRPIVFPTHCPVCGSDVERVEGEAVTRCTGGLICGAQRKESLKHFVSRRAMDVDGMGDKIIDQLVEREYVHTPADLFRLTAGKLTGLDRMGPKSAQNVVNALEKAKATTFARFLYALGIREVGEATAAGLAAYFGTLEALQTATIDELQKVPDVGIVVATHVFNFFAEESNRDVIGQLLAEGVHWPAPVVINVQEIDSPFAGKTVVLTGSLSQMSRDDAKARLAALGAKVAGSVSKKTDLVIAGEAAGSKLAKAQELGITVIDEAEMIRLLGA.

NAD(+) contacts are provided by residues 32–36 (DAEYD), 81–82 (SL), and Glu113. Lys115 serves as the catalytic N6-AMP-lysine intermediate. The NAD(+) site is built by Arg136, Glu173, Lys290, and Lys314. Zn(2+) contacts are provided by Cys408, Cys411, Cys426, and Cys432. The 79-residue stretch at 593 to 671 (EIDSPFAGKT…EAEMIRLLGA (79 aa)) folds into the BRCT domain.

It belongs to the NAD-dependent DNA ligase family. LigA subfamily. Mg(2+) serves as cofactor. Requires Mn(2+) as cofactor.

The enzyme catalyses NAD(+) + (deoxyribonucleotide)n-3'-hydroxyl + 5'-phospho-(deoxyribonucleotide)m = (deoxyribonucleotide)n+m + AMP + beta-nicotinamide D-nucleotide.. In terms of biological role, DNA ligase that catalyzes the formation of phosphodiester linkages between 5'-phosphoryl and 3'-hydroxyl groups in double-stranded DNA using NAD as a coenzyme and as the energy source for the reaction. It is essential for DNA replication and repair of damaged DNA. This is DNA ligase from Salmonella dublin (strain CT_02021853).